Here is a 420-residue protein sequence, read N- to C-terminus: Na(+)/H(+) antiporter NhaA (420 aa).

Transmembrane regions (helical) follow at residues 4 to 24 (VWNFITGYSLLLIGGAIIALI), 70 to 90 (DLLMALFFAIAAKEVWEAVIL), 104 to 124 (LVATLGGMVGPISIYLGIAYF), 132 to 152 (AVANGWAIPTATDIAFSYLVG), 165 to 185 (FLLLLAIADDAAGLLILAIFY), 192 to 212 (PAWLLLSFGAALGVYVLANWL), 233 to 250 (LSFWPYALAGCASWYGFM), 299 to 319 (VEIILGLFGLMNAGVAFSAMG), 323 to 343 (WLVLAGLLIGKPVGIFLFGWL), 361 to 381 (LVVIGCVAAIGFTVSLFVASV), and 395 to 415 (GALFSFGAAAVSIIVGKLTQV).

This sequence belongs to the NhaA Na(+)/H(+) (TC 2.A.33) antiporter family.

The protein localises to the cell inner membrane. The enzyme catalyses Na(+)(in) + 2 H(+)(out) = Na(+)(out) + 2 H(+)(in). Na(+)/H(+) antiporter that extrudes sodium in exchange for external protons. The polypeptide is Na(+)/H(+) antiporter NhaA (Jannaschia sp. (strain CCS1)).